The primary structure comprises 577 residues: Phosphoethanolamine transferase EptC (577 aa).

A run of 5 helical transmembrane segments spans residues 17-37 (LGWALLYFWFFSTLLQAIIYI), 44-64 (NGIRDSLLFSSLWLIPVFLFP), 69-89 (IIAAVIGVVLWAASLAALCYY), 119-139 (YFSLKIVLIALAYTAVAVLLW), and 154-174 (VVSFALLYGLILHPIAMNTFI).

The protein belongs to the phosphoethanolamine transferase family. EptC/CptA subfamily. In terms of assembly, forms a complex with an unidentified protein of approximately 36 kDa.

Its subcellular location is the cell inner membrane. It functions in the pathway bacterial outer membrane biogenesis; LPS core biosynthesis. In terms of biological role, catalyzes the addition of a phosphoethanolamine moiety to the outer membrane lipopolysaccharide core. The sequence is that of Phosphoethanolamine transferase EptC (eptC) from Escherichia coli (strain K12).